The primary structure comprises 498 residues: Tryptophan decarboxylase TDC2 (498 aa).

An N6-(pyridoxal phosphate)lysine modification is found at Lys316.

It belongs to the group II decarboxylase family. Pyridoxal 5'-phosphate is required as a cofactor.

The catalysed reaction is L-tryptophan + H(+) = tryptamine + CO2. Involved in the biosynthesis of tryptamine. Supplies tryptamine for the indole moiety of camptothecin (CPT), an anti-cancer monoterpene alkaloid. Represents a key step in monoterpene indole alkaloid biosynthesis. Is specific for tryptophan, and inactive against tyrosine, phenylalanine and 3,4-dihydroxyphenylalanine (dopa). This is Tryptophan decarboxylase TDC2 from Camptotheca acuminata (Happy tree).